The sequence spans 158 residues: Cyclic pyranopterin monophosphate synthase (158 aa).

Substrate is bound by residues 75–77 and 113–114; these read LCH and ME. Asp-128 is an active-site residue.

The protein belongs to the MoaC family. Homohexamer; trimer of dimers.

It carries out the reaction (8S)-3',8-cyclo-7,8-dihydroguanosine 5'-triphosphate = cyclic pyranopterin phosphate + diphosphate. It participates in cofactor biosynthesis; molybdopterin biosynthesis. Its function is as follows. Catalyzes the conversion of (8S)-3',8-cyclo-7,8-dihydroguanosine 5'-triphosphate to cyclic pyranopterin monophosphate (cPMP). The sequence is that of Cyclic pyranopterin monophosphate synthase from Mannheimia succiniciproducens (strain KCTC 0769BP / MBEL55E).